The primary structure comprises 141 residues: Nucleoside diphosphate kinase (141 aa).

Positions 11, 59, 87, 93, 104, and 114 each coordinate ATP. H117 functions as the Pros-phosphohistidine intermediate in the catalytic mechanism.

Belongs to the NDK family. As to quaternary structure, homotetramer. The cofactor is Mg(2+).

It localises to the cytoplasm. The catalysed reaction is a 2'-deoxyribonucleoside 5'-diphosphate + ATP = a 2'-deoxyribonucleoside 5'-triphosphate + ADP. It catalyses the reaction a ribonucleoside 5'-diphosphate + ATP = a ribonucleoside 5'-triphosphate + ADP. Major role in the synthesis of nucleoside triphosphates other than ATP. The ATP gamma phosphate is transferred to the NDP beta phosphate via a ping-pong mechanism, using a phosphorylated active-site intermediate. This chain is Nucleoside diphosphate kinase, found in Delftia acidovorans (strain DSM 14801 / SPH-1).